We begin with the raw amino-acid sequence, 338 residues long: Protein mono-ADP-ribosyltransferase PARP11 (338 aa).

The residue at position 13 (E13) is an ADP-ribosyl glutamic acid. Position 18 is an N6-(ADP-ribosyl)lysine (K18). A WWE domain is found at 22–106; sequence NEVDDMDTSD…TTGKQRLIKR (85 aa). Residues C56 and C72 each carry the ADP-ribosylcysteine modification. D87 is modified (ADP-ribosyl aspartic acid). Residues 123–338 enclose the PARP catalytic domain; the sequence is IPMPPHWENV…IYPEYLIDFH (216 aa).

Belongs to the ARTD/PARP family. Interacts with PARP12; this interaction plays a role in zika virus suppression. Post-translationally, auto-mono-ADP-ribosylated.

It localises to the nucleus. The protein localises to the nuclear pore complex. The catalysed reaction is L-aspartyl-[protein] + NAD(+) = 4-O-(ADP-D-ribosyl)-L-aspartyl-[protein] + nicotinamide. The enzyme catalyses L-cysteinyl-[protein] + NAD(+) = S-(ADP-D-ribosyl)-L-cysteinyl-[protein] + nicotinamide + H(+). It carries out the reaction L-glutamyl-[protein] + NAD(+) = 5-O-(ADP-D-ribosyl)-L-glutamyl-[protein] + nicotinamide. It catalyses the reaction L-lysyl-[protein] + NAD(+) = N(6)-(ADP-D-ribosyl)-L-lysyl-[protein] + nicotinamide + H(+). Functionally, mono-ADP-ribosyltransferase that mediates mono-ADP-ribosylation of target proteins. Plays a role in nuclear envelope stability and nuclear remodeling during spermiogenesis. Inhibits the type I interferon activated signaling pathway. Mechanistically, mono-ADP-ribosylates beta-TrCP/BTRC to promote IFNAR1 ubiquitination and protect BTRC from ubiquitin-proteasome degradation. Additionally, acts as an antiviral factor by cooperating with PARP12 to suppress Zika virus replication, independent of IFNAR1 regulation or intrinsic PARP enzymatic activity. Instead, facilitates the degradation of viral NS1 and NS3 proteins, potentially disrupting viral replication. This Homo sapiens (Human) protein is Protein mono-ADP-ribosyltransferase PARP11.